The sequence spans 410 residues: Secreted protein PRY1 (410 aa).

The first 20 residues, Met-1 to Ser-20, serve as a signal peptide directing secretion. 3 disordered regions span residues Pro-64–Ser-86, Ser-102–Ser-132, and Ser-148–Ser-260. The span at Ser-148–Pro-179 shows a compositional bias: low complexity. Over residues Ser-197 to Ser-211 the composition is skewed to gly residues. Over residues Gly-212–Ser-260 the composition is skewed to low complexity. Positions Leu-283–Tyr-394 constitute an SCP domain.

This sequence belongs to the CRISP family.

The protein localises to the secreted. Secreted protein that acts as a virulence factor during infections. The sequence is that of Secreted protein PRY1 (PRY1) from Candida albicans (strain SC5314 / ATCC MYA-2876) (Yeast).